Reading from the N-terminus, the 1016-residue chain is EMILIN-1 (1016 aa).

A signal peptide spans 1-21; that stretch reads MAPRTLWSCYLCCLLTAAAGA. Residues 56 to 131 enclose the EMI domain; the sequence is HRNWCAYVVT…QGYGGDDCAE (76 aa). 3 disulfide bridges follow: Cys60/Cys121, Cys85/Cys92, and Cys120/Cys129. The interval 135-182 is disordered; it reads PALGPASSTPRPLARPARPNLSGSSAGSPLSGLGGEGPGESEKVQQLE. Positions 139–165 are enriched in low complexity; it reads PASSTPRPLARPARPNLSGSSAGSPLS. An N-linked (GlcNAc...) asparagine glycan is attached at Asn154. Residues 216 to 256 adopt a coiled-coil conformation; that stretch reads TAFNGRQQPADAAARPGVHETLNEIQHQLQLLDTRVSTHDQ. 2 disordered regions span residues 257-288 and 383-402; these read ELGHLNNHHGGSSSSGGSRAPAPASAPPGPSE and RGTELGGAAGQGGHPPGYTS. A compositionally biased stretch (low complexity) spans 266–279; that stretch reads GGSSSSGGSRAPAP. Positions 356–420 form a coiled coil; sequence PELGRRLAEL…EDRFNSTLGP (65 aa). A compositionally biased stretch (gly residues) spans 386–397; sequence ELGGAAGQGGHP. A glycan (N-linked (GlcNAc...) asparagine) is linked at Asn415. The segment at 416–435 is disordered; sequence STLGPSEEQEESWPGAPGGL. N-linked (GlcNAc...) asparagine glycans are attached at residues Asn455 and Asn561. Residues 576–603 are a coiled coil; the sequence is AHGDEGCGACGGVQEELGRLRDGVERCS. A glycan (N-linked (GlcNAc...) asparagine) is linked at Asn658. Positions 685–752 form a coiled coil; sequence IISEINRLQQ…GLQGLREGLS (68 aa). Asn766 and Asn794 each carry an N-linked (GlcNAc...) asparagine glycan. 2 disordered regions span residues 811–863 and 942–961; these read DLTG…VEGA and RVDSGGYEPEGLENKPVAES. The 51-residue stretch at 814–864 folds into the Collagen-like domain; it reads GPAGEAGPPGPPGLQGPPGPAGPPGSPGKDGQEGPIGPPGPQGEQGVEGAP. Over residues 821 to 839 the composition is skewed to pro residues; the sequence is PPGPPGLQGPPGPAGPPGS. Positions 835-857 form a coiled coil; sequence GPPGSPGKDGQEGPIGPPGPQGE. Residues 866–1013 enclose the C1q domain; sequence APVPQVAFSA…GALLYGDPEL (148 aa).

In terms of assembly, homotrimer associated through a moderately stable interaction of the C-terminal globular C1q domains, allowing the nucleation of the triple helix and then a further quaternary assembly to higher-order polymers via intermolecular disulfide bonds. Interacts with EMILIN2. Interacts with EFEMP2; this interaction promotes the incorporation of EFEMP2 into the extracellular matrix. Distributed in tissues where resilience and elastic recoil are prominent. Highest levels in the adult small intestine, aorta, lung, uterus, and appendix and in the fetal spleen, kidney, lung, and heart; intermediate expression was detected in adult liver, ovary, colon, stomach, lymph node and spleen; adult heart, bladder, prostate, adrenal gland, mammary gland, placenta and kidney showed low expression whereas a series of other adult tissues, including skeletal muscle and different regions of adult brain show no expression. Detected in intramuscular nerve bundles, where it particularly localizes in the epineurium, the most external layer of dense connective tissue enclosing the nerve.

It is found in the secreted. The protein localises to the extracellular space. Its subcellular location is the extracellular matrix. Involved in elastic and collagen fibers formation. It is required for EFEMP2 deposition into the extracellular matrix, and collagen network assembly and cross-linking via protein-lysine 6-oxidase/LOX activity. May be responsible for anchoring smooth muscle cells to elastic fibers, and may be involved in the processes that regulate vessel assembly. Has cell adhesive capacity. This Homo sapiens (Human) protein is EMILIN-1 (EMILIN1).